The chain runs to 410 residues: Metacaspase-1B (410 aa).

Residues 1–106 (MYHRNSAPPP…SFGKGAPSNY (106 aa)) are disordered. Composition is skewed to pro residues over residues 7–23 (APPP…PQSQ) and 32–52 (PPYP…PPPT). Residues histidine 201 and cysteine 257 contribute to the active site.

Belongs to the peptidase C14B family.

Its function is as follows. Involved in cell death (apoptosis). This is Metacaspase-1B (casB) from Aspergillus clavatus (strain ATCC 1007 / CBS 513.65 / DSM 816 / NCTC 3887 / NRRL 1 / QM 1276 / 107).